Reading from the N-terminus, the 286-residue chain is MMPEFEKNTVHIRDPERVEQIICGLIKGGASKLQIITDFDMTLSRFAVNGKRCPSCHNIIDNSKLVTDDCRKKLVHLKETYYPIEIDPHLTMEEKYPFMVEWYFKSHTLLVEQRLEKDKLPEAVRESDVSLKEGYEQFFDRLHQHSVPVFIFSAGLGDVLEEIIRQAGVYHPNVKVVSNFMDFDDNGVLKGFKGELIHVYNKHDGALRNTEYFKQLKDNGNIILLGDSLGDLTMADGVPNVENILKIGYLNDKVEELLEKYMDSYNIVLARDETLEVPNSILQKIL.

Asp38 functions as the Nucleophile in the catalytic mechanism. Mg(2+)-binding residues include Asp38 and Asp40. Catalysis depends on Asp40, which acts as the Proton donor. Substrate-binding positions include Glu85, Ser106, 153–154 (SA), and Lys202. Asp227 contributes to the Mg(2+) binding site.

The protein belongs to the pyrimidine 5'-nucleotidase family.

The protein resides in the cytoplasm. It catalyses the reaction a ribonucleoside 5'-phosphate + H2O = a ribonucleoside + phosphate. In terms of biological role, can act both as nucleotidase and as phosphotransferase. This chain is Cytosolic 5'-nucleotidase 3 (nt5c3), found in Danio rerio (Zebrafish).